Here is a 179-residue protein sequence, read N- to C-terminus: DELTA-actitoxin-Afr1c (179 aa).

Residues 1–29 form an N-terminal alpha-helix that contributes to the pore region; that stretch reads SAEVAGAIIDGASLTFDVLQTVLKALGDV. Positions 11-30 are N-terminal region; the sequence is GASLTFDVLQTVLKALGDVS. Position 31 (Arg31) interacts with an N-(acyl)-sphingosylphosphocholine. The N-acetyl-D-glucosamine 6-sulfate site is built by Tyr51 and Arg53. 12 residues coordinate an N-(acyl)-sphingosylphosphocholine: Arg53, Ser54, Arg79, Gly85, Tyr113, Ser114, Trp116, Tyr133, Tyr137, Tyr138, Arg144, and Gly168. A trp-rich region, which is important for the binding to lipid membrane region spans residues 105–120; the sequence is SIPFDYNLYSNWWNVK. An N-acetyl-D-glucosamine 6-sulfate-binding site is contributed by Tyr138. Residues 144-146 carry the Cell attachment site, crucial for protein stability motif; the sequence is RGD.

The protein belongs to the actinoporin family. Sea anemone subfamily. In terms of assembly, octamer or nonamer in membranes. Monomer in the soluble state.

The protein localises to the secreted. It localises to the nematocyst. The protein resides in the target cell membrane. Functionally, pore-forming toxin (PFT) that consists of a crown-shaped octamer or nonamer that forms cation-selective hydrophilic pores of about 1.5 nm (inside) and 13 nm (outside) and causes cytolysis. It causes cardiac stimulation. Also causes hemolysis (HC(50)=0.3 nM). Interestingly, the Phe-16 is crucial for hemolysis. Pore formation is a multi-step process that involves specific recognition of membrane sphingomyelin (but neither cholesterol nor phosphatidylcholine) using aromatic rich region and adjacent phosphocholine (POC) binding site, firm binding to the membrane (mainly driven by hydrophobic interactions) accompanied by the transfer of the N-terminal region to the lipid-water interface and finally pore formation after oligomerization of monomers. It is probable that a dimeric form is an assembly intermediate before the complete oligomerization. The formation of stable pores occurs only in vesicles composed of DOPC/SM (there is no oligomerization when the PFT is treated with vesicles of DOPC or SM alone). The transmembrane pore displays 8 lateral perforations, one at each subunit-subunit interface, partially occupied by the acyl-chain region of a bridging lipid. Each pore contains 24 lipid molecules, firmly bound to each subunit, that is, 3 lipids (L1, L2, L3, L4 and/or L5) are associated to each subunit. Lipid L1 bridges 2 subunits, whereas lipids L2 and L3 bind to sites at single subunit. The protein is DELTA-actitoxin-Afr1c of Actinia fragacea (Strawberry anemone).